The sequence spans 119 residues: MIHGIGVDLIEIDRIQALYSKQPKLVERILTKNEQHKFNNFTHEQRKIEFLAGRFATKEAFSKALGTGLGKHVAFNDIDCYNDELGKPKIDYEGFIVHVSISHTEHYAMSQVVLEKSAF.

Mg(2+)-binding residues include Asp-8 and Glu-59.

Belongs to the P-Pant transferase superfamily. AcpS family. The cofactor is Mg(2+).

Its subcellular location is the cytoplasm. The enzyme catalyses apo-[ACP] + CoA = holo-[ACP] + adenosine 3',5'-bisphosphate + H(+). Its function is as follows. Transfers the 4'-phosphopantetheine moiety from coenzyme A to a Ser of acyl-carrier-protein. This chain is Holo-[acyl-carrier-protein] synthase, found in Staphylococcus aureus (strain USA300).